Reading from the N-terminus, the 191-residue chain is MKTLFDTKELLNEFDINLIGIDEAGRGALAGPMMMAACKLNKKLDGLCDSKKLSEKKREELYEIIIKNSNYLILAFSSEQIDTLGLSTCLKTGLKLIKKHFKAENNFLYDGNTNLGINGIKTQIKADTSILQVSAASILAKVSKDKVMNFLAKDFPCYEFEKNKAYGTKAHKEVIAKFGICKLHRKSFKLL.

The RNase H type-2 domain maps to 16–191 (INLIGIDEAG…KLHRKSFKLL (176 aa)). A divalent metal cation is bound by residues Asp-22, Glu-23, and Asp-110.

The protein belongs to the RNase HII family. Requires Mn(2+) as cofactor. The cofactor is Mg(2+).

The protein localises to the cytoplasm. It carries out the reaction Endonucleolytic cleavage to 5'-phosphomonoester.. Its function is as follows. Endonuclease that specifically degrades the RNA of RNA-DNA hybrids. The sequence is that of Ribonuclease HII from Campylobacter jejuni subsp. doylei (strain ATCC BAA-1458 / RM4099 / 269.97).